Reading from the N-terminus, the 43-residue chain is MLAFCYSLPNAGDVIKGRVYENDYTLYIYLFDYPHSEAILAEC.

This sequence belongs to the orthopoxvirus OPG041 family.

This Cynomys gunnisoni (Gunnison's prairie dog) protein is Truncated K3L homolog (OPG041).